Here is a 280-residue protein sequence, read N- to C-terminus: tRNA pseudouridine synthase A (280 aa).

Asp60 (nucleophile) is an active-site residue. Substrate is bound at residue Tyr119.

Belongs to the tRNA pseudouridine synthase TruA family. Homodimer.

It catalyses the reaction uridine(38/39/40) in tRNA = pseudouridine(38/39/40) in tRNA. In terms of biological role, formation of pseudouridine at positions 38, 39 and 40 in the anticodon stem and loop of transfer RNAs. The protein is tRNA pseudouridine synthase A of Treponema pallidum (strain Nichols).